The chain runs to 198 residues: DnaJ homolog subfamily C member 5 (198 aa).

S8, S10, S12, and S15 each carry phosphoserine. In terms of domain architecture, J spans 13 to 82; sequence GESLYHVLGL…RNIYDKYGSL (70 aa). Y17 carries the post-translational modification Phosphotyrosine. Position 56 is an N6-acetyllysine (K56). S151 carries the post-translational modification Phosphoserine.

As to quaternary structure, homodimer. Interacts with the chaperone complex consisting of HSC70 and SGTA. Interacts with ZDHHC13 (via ANK repeats). Interacts with ZDHHC17 (via ANK repeats). Interacts with SYT1, SYT5 and SYT7, and with SYT9, forming a complex with SNAP25. The interaction with SYT9 is stimulated tenfold in presence of calcium. In terms of processing, formation of the chaperone complex DNAJC5/HSC70 is not regulated by phosphorylation. Ser-10 phosphorylation induces an order-to-disorder transition triggering the interaction with Lys-58. This conformational switch modulates DNAJC5's cellular functions by reducing binding to syntaxin and synaptogamin without altering HSC70 interactions. Post-translationally, palmitoylated. Could be palmitoylated by DHHC3, DHHC7, DHHC15 and DHHC17. Palmitoylation occurs probably in the cysteine-rich domain and regulates DNAJC5 membrane attachment.

The protein localises to the cytoplasm. It is found in the cytosol. Its subcellular location is the membrane. It localises to the cytoplasmic vesicle. The protein resides in the secretory vesicle. The protein localises to the chromaffin granule membrane. It is found in the melanosome. Its subcellular location is the cell membrane. Functionally, acts as a co-chaperone for the SNARE protein SNAP-25. Involved in the calcium-mediated control of a late stage of exocytosis. Acts as a general chaperone in regulated exocytosis. May have an important role in presynaptic function. May be involved in calcium-dependent neurotransmitter release at nerve endings. The polypeptide is DnaJ homolog subfamily C member 5 (Mus musculus (Mouse)).